Here is a 70-residue protein sequence, read N- to C-terminus: Small ribosomal subunit protein bS21 (70 aa).

The protein belongs to the bacterial ribosomal protein bS21 family.

The protein is Small ribosomal subunit protein bS21 of Paracidovorax citrulli (strain AAC00-1) (Acidovorax citrulli).